The chain runs to 187 residues: ATP-dependent protease subunit HslV (187 aa).

The active site involves Thr7. Na(+) is bound by residues Ala162, Cys165, and Thr168.

The protein belongs to the peptidase T1B family. HslV subfamily. A double ring-shaped homohexamer of HslV is capped on each side by a ring-shaped HslU homohexamer. The assembly of the HslU/HslV complex is dependent on binding of ATP.

It localises to the cytoplasm. It carries out the reaction ATP-dependent cleavage of peptide bonds with broad specificity.. Allosterically activated by HslU binding. Its function is as follows. Protease subunit of a proteasome-like degradation complex believed to be a general protein degrading machinery. This chain is ATP-dependent protease subunit HslV, found in Methylococcus capsulatus (strain ATCC 33009 / NCIMB 11132 / Bath).